The sequence spans 405 residues: Cytoplasmic tRNA 2-thiolation protein 2 (405 aa).

It belongs to the CTU2/NCS2 family.

The protein resides in the cytoplasm. Its pathway is tRNA modification; 5-methoxycarbonylmethyl-2-thiouridine-tRNA biosynthesis. Functionally, plays a central role in 2-thiolation of mcm(5)S(2)U at tRNA wobble positions of tRNA(Lys), tRNA(Glu) and tRNA(Gln). May act by forming a heterodimer with NCS6/CTU1 that ligates sulfur from thiocarboxylated URM1 onto the uridine of tRNAs at wobble position. This is Cytoplasmic tRNA 2-thiolation protein 2 from Drosophila persimilis (Fruit fly).